Here is a 632-residue protein sequence, read N- to C-terminus: Putative golgin subfamily A member 8I (632 aa).

The disordered stretch occupies residues 1-77 (MAEETQHNKL…SSATLKDLES (77 aa)). Residues 38–50 (TNGSIPQTATSGG) show a composition bias toward polar residues. 2 coiled-coil regions span residues 86–154 (LDSR…HMKR) and 209–421 (KLEQ…SLMA). Residues 352-362 (KQEERIQEQHK) show a composition bias toward basic and acidic residues. 4 disordered regions span residues 352 to 383 (KQEERIQEQHKSLQQLAKPQSVFEEPNNENKS), 423 to 445 (PGEGHGGEHLDSEGEEAPQPMPS), 496 to 524 (LSEPGGRAKDAALGGGHHQAGAQGGDEGE), and 550 to 569 (AHNPADEPGPGAPAPQELGA). The span at 508-520 (LGGGHHQAGAQGG) shows a compositional bias: gly residues. The segment at 529–632 (AADGIAAYSN…CWAWLPRRRR (104 aa)) is golgi-targeting domain. Residues 555–568 (DEPGPGAPAPQELG) are compositionally biased toward low complexity.

This sequence belongs to the GOLGA8 family.

It is found in the golgi apparatus. The protein resides in the golgi stack membrane. Its function is as follows. May be involved in maintaining Golgi structure. In Homo sapiens (Human), this protein is Putative golgin subfamily A member 8I.